The chain runs to 145 residues: 3-hydroxyacyl-[acyl-carrier-protein] dehydratase FabZ (145 aa).

Histidine 49 is an active-site residue.

It belongs to the thioester dehydratase family. FabZ subfamily.

Its subcellular location is the cytoplasm. The catalysed reaction is a (3R)-hydroxyacyl-[ACP] = a (2E)-enoyl-[ACP] + H2O. In terms of biological role, involved in unsaturated fatty acids biosynthesis. Catalyzes the dehydration of short chain beta-hydroxyacyl-ACPs and long chain saturated and unsaturated beta-hydroxyacyl-ACPs. The protein is 3-hydroxyacyl-[acyl-carrier-protein] dehydratase FabZ of Rickettsia conorii (strain ATCC VR-613 / Malish 7).